A 209-amino-acid chain; its full sequence is Uracil phosphoribosyltransferase (209 aa).

5-phospho-alpha-D-ribose 1-diphosphate is bound by residues Arg79, Arg104, and 131 to 139 (DPLLATGNS). Residues Ile194 and 199–201 (GDA) each bind uracil. Asp200 contacts 5-phospho-alpha-D-ribose 1-diphosphate.

Belongs to the UPRTase family. The cofactor is Mg(2+).

It carries out the reaction UMP + diphosphate = 5-phospho-alpha-D-ribose 1-diphosphate + uracil. The protein operates within pyrimidine metabolism; UMP biosynthesis via salvage pathway; UMP from uracil: step 1/1. Its activity is regulated as follows. Allosterically activated by GTP. Its function is as follows. Catalyzes the conversion of uracil and 5-phospho-alpha-D-ribose 1-diphosphate (PRPP) to UMP and diphosphate. This chain is Uracil phosphoribosyltransferase, found in Rhodococcus opacus (strain B4).